The sequence spans 205 residues: Small ribosomal subunit protein uS4 (205 aa).

The tract at residues 25–48 (KTIEARPTPPGQHGAKNTRRKKSD) is disordered. One can recognise an S4 RNA-binding domain in the interval 94–157 (RRLDNVVFRA…TKLPIVVETL (64 aa)).

This sequence belongs to the universal ribosomal protein uS4 family. As to quaternary structure, part of the 30S ribosomal subunit. Contacts protein S5. The interaction surface between S4 and S5 is involved in control of translational fidelity.

One of the primary rRNA binding proteins, it binds directly to 16S rRNA where it nucleates assembly of the body of the 30S subunit. In terms of biological role, with S5 and S12 plays an important role in translational accuracy. In Methylobacillus flagellatus (strain ATCC 51484 / DSM 6875 / VKM B-1610 / KT), this protein is Small ribosomal subunit protein uS4.